We begin with the raw amino-acid sequence, 25 residues long: uncharacterized protein (25 aa).

This is an uncharacterized protein from Archaeoglobus fulgidus (strain ATCC 49558 / DSM 4304 / JCM 9628 / NBRC 100126 / VC-16).